The primary structure comprises 1088 residues: V-type proton ATPase catalytic subunit A (1088 aa).

257-264 (GAFGCGKT) contributes to the ATP binding site. The DOD-type homing endonuclease domain occupies 485 to 662 (LLGTWAGIGN…LVKIAHSLGI (178 aa)).

It belongs to the ATPase alpha/beta chains family. In terms of assembly, V-ATPase is a heteromultimeric enzyme composed of a peripheral catalytic V1 complex (components A to H) attached to an integral membrane V0 proton pore complex (components: a, c, c', c'', d, e, f and VOA1). Post-translationally, this protein undergoes a protein self splicing that involves a post-translational excision of the VDE intervening region (intein) followed by peptide ligation.

It localises to the vacuole membrane. It carries out the reaction ATP + H2O + 4 H(+)(in) = ADP + phosphate + 5 H(+)(out). Functionally, catalytic subunit of the V1 complex of vacuolar(H+)-ATPase (V-ATPase), a multisubunit enzyme composed of a peripheral complex (V1) that hydrolyzes ATP and a membrane integral complex (V0) that translocates protons. V-ATPase is responsible for acidifying and maintaining the pH of intracellular compartments. In terms of biological role, VDE is an endonuclease that can cleave at a site present in a VMA1 allele that lacks the derived endonuclease segment of the open reading frame; cleavage at this site only occurs during meiosis and initiates 'homing', a genetic event that converts a VMA1 allele lacking VDE into one that contains it. This is V-type proton ATPase catalytic subunit A (VMA1) from Candida tropicalis (Yeast).